Reading from the N-terminus, the 283-residue chain is UPF0276 protein Anae109_1558 (283 aa).

It belongs to the UPF0276 family.

The sequence is that of UPF0276 protein Anae109_1558 from Anaeromyxobacter sp. (strain Fw109-5).